Reading from the N-terminus, the 76-residue chain is Sec-independent protein translocase protein TatA (76 aa).

The helical transmembrane segment at M1 to G21 threads the bilayer. Basic and acidic residues-rich tracts occupy residues F39 to P50 and G64 to S76. The segment at F39–S76 is disordered.

The protein belongs to the TatA/E family. The Tat system comprises two distinct complexes: a TatABC complex, containing multiple copies of TatA, TatB and TatC subunits, and a separate TatA complex, containing only TatA subunits. Substrates initially bind to the TatABC complex, which probably triggers association of the separate TatA complex to form the active translocon.

The protein localises to the cell inner membrane. Functionally, part of the twin-arginine translocation (Tat) system that transports large folded proteins containing a characteristic twin-arginine motif in their signal peptide across membranes. TatA could form the protein-conducting channel of the Tat system. This Herminiimonas arsenicoxydans protein is Sec-independent protein translocase protein TatA.